The primary structure comprises 500 residues: UDP-N-acetylmuramoyl-L-alanyl-D-glutamate--2,6-diaminopimelate ligase (500 aa).

UDP-N-acetyl-alpha-D-muramoyl-L-alanyl-D-glutamate is bound by residues L26, S28, and 43 to 45; that span reads HQV. 123-129 serves as a coordination point for ATP; that stretch reads GTNGKTT. Residues N164, 165 to 166, S192, Q198, and R200 each bind UDP-N-acetyl-alpha-D-muramoyl-L-alanyl-D-glutamate; that span reads TT. K232 is modified (N6-carboxylysine). Residues R399, 423–426, G474, and E478 each bind meso-2,6-diaminopimelate; that span reads DNPR. The Meso-diaminopimelate recognition motif signature appears at 423–426; the sequence is DNPR.

Belongs to the MurCDEF family. MurE subfamily. The cofactor is Mg(2+). Carboxylation is probably crucial for Mg(2+) binding and, consequently, for the gamma-phosphate positioning of ATP.

Its subcellular location is the cytoplasm. It carries out the reaction UDP-N-acetyl-alpha-D-muramoyl-L-alanyl-D-glutamate + meso-2,6-diaminopimelate + ATP = UDP-N-acetyl-alpha-D-muramoyl-L-alanyl-gamma-D-glutamyl-meso-2,6-diaminopimelate + ADP + phosphate + H(+). Its pathway is cell wall biogenesis; peptidoglycan biosynthesis. Its function is as follows. Catalyzes the addition of meso-diaminopimelic acid to the nucleotide precursor UDP-N-acetylmuramoyl-L-alanyl-D-glutamate (UMAG) in the biosynthesis of bacterial cell-wall peptidoglycan. This is UDP-N-acetylmuramoyl-L-alanyl-D-glutamate--2,6-diaminopimelate ligase from Actinobacillus pleuropneumoniae serotype 5b (strain L20).